We begin with the raw amino-acid sequence, 490 residues long: Betaine aldehyde dehydrogenase (490 aa).

NAD(+)-binding positions include lysine 174, glutamate 177, and 227–232; that span reads GGIETG. Catalysis depends on residues glutamate 249 and cysteine 283. An NAD(+)-binding site is contributed by glutamate 384.

Belongs to the aldehyde dehydrogenase family. As to quaternary structure, homodimer.

The catalysed reaction is betaine aldehyde + NAD(+) + H2O = glycine betaine + NADH + 2 H(+). It participates in amine and polyamine biosynthesis; betaine biosynthesis via choline pathway; betaine from betaine aldehyde: step 1/1. With respect to regulation, activity is stimulated by low concentrations of salts and by moderate concentrations of glycine betaine. Highly tolerant to high ionic conditions. In vitro, activity is highly stimulated in the presence of proline. Its function is as follows. Involved in the biosynthesis of the osmoprotectant glycine betaine from choline. Catalyzes the oxidation of betaine aldehyde to betaine. Shows specificity for betaine aldehyde as substrate. Can use both NAD(+) and NADP(+), but NAD(+) is strongly preferred. This is Betaine aldehyde dehydrogenase from Bacillus subtilis (strain 168).